We begin with the raw amino-acid sequence, 96 residues long: Protein RnfH (96 aa).

This sequence belongs to the UPF0125 (RnfH) family.

The sequence is that of Protein RnfH from Psychromonas ingrahamii (strain DSM 17664 / CCUG 51855 / 37).